The chain runs to 543 residues: Glutamyl-tRNA(Gln) amidotransferase subunit A, chloroplastic/mitochondrial (543 aa).

Residues Lys121 and Ser196 each act as charge relay system in the active site. The active-site Acyl-ester intermediate is Ser220.

This sequence belongs to the amidase family. GatA subfamily. As to quaternary structure, subunit of the heterotrimeric GatCAB amidotransferase (AdT) complex, composed of A, B and C subunits.

Its subcellular location is the mitochondrion. The protein resides in the plastid. It is found in the chloroplast stroma. It catalyses the reaction L-glutamyl-tRNA(Gln) + L-glutamine + ATP + H2O = L-glutaminyl-tRNA(Gln) + L-glutamate + ADP + phosphate + H(+). Functionally, allows the formation of correctly charged Gln-tRNA(Gln) through the transamidation of misacylated Glu-tRNA(Gln) in chloroplasts and mitochondria. The reaction takes place in the presence of glutamine and ATP through an activated gamma-phospho-Glu-tRNA(Gln). The polypeptide is Glutamyl-tRNA(Gln) amidotransferase subunit A, chloroplastic/mitochondrial (Zea mays (Maize)).